The sequence spans 241 residues: Agamous-like MADS-box protein AP1 (241 aa).

The 61-residue stretch at 1 to 61 folds into the MADS-box domain; that stretch reads MGRGRVQLKR…GKLFEYSTDS (61 aa). Residues 88–178 form the K-box domain; sequence QGNWSLEYSK…AKEIKEKEKT (91 aa).

As to expression, expressed in tendrils and flowers.

It localises to the nucleus. Functionally, probable transcription factor involved in flower development. The chain is Agamous-like MADS-box protein AP1 from Vitis vinifera (Grape).